The sequence spans 302 residues: Deoxyribonuclease-1-like 1 (302 aa).

A signal peptide spans 1 to 18 (MHYPTALLFLILANGAQA). Active-site residues include Glu97 and His148. A disulfide bridge links Cys187 with Cys224. N-linked (GlcNAc...) asparagine glycosylation occurs at Asn261.

Belongs to the DNase I family. Highest levels in skeletal and cardiac muscles. Detectable in all other tissues tested except brain.

It localises to the endoplasmic reticulum. The sequence is that of Deoxyribonuclease-1-like 1 (DNASE1L1) from Homo sapiens (Human).